Here is a 753-residue protein sequence, read N- to C-terminus: ATPase family gene 2 protein homolog B (753 aa).

Residue methionine 1 is modified to N-acetylmethionine. The segment at 1-189 (MAPDSDPFPE…PRTRVSLGGE (189 aa)) is required for interaction with AFG2A and CINP. A disordered region spans residues 171–203 (SPDPAGLVTPRTRVSLGGEPPSEAQPQPEVPLG). ATP is bound by residues 241–248 (GPPGVGKT) and 505–512 (GPPGCAKT).

This sequence belongs to the AAA ATPase family. AFG2 subfamily. Part of the 55LCC heterohexameric ATPase complex composed at least of AIRIM, AFG2A, AFG2B and CINP. Associates with pre-60S ribosomal particles. In terms of tissue distribution, expressed in both neurons and glia during embryonic and adult stages of brain development.

Its subcellular location is the cytoplasm. It localises to the cytoskeleton. The protein resides in the spindle. It is found in the nucleus. It carries out the reaction ATP + H2O = ADP + phosphate + H(+). In the context of 55LCC heterohexameric ATPase complex, the ATPase activity is stimulated by DNA binding and inhibited in presence of RNA. In terms of biological role, ATP-dependent chaperone part of the 55LCC heterohexameric ATPase complex which is chromatin-associated and promotes replisome proteostasis to maintain replication fork progression and genome stability. Required for replication fork progression, sister chromatid cohesion, and chromosome stability. The ATPase activity is specifically enhanced by replication fork DNA and is coupled to cysteine protease-dependent cleavage of replisome substrates in response to replication fork damage. Uses ATPase activity to process replisome substrates in S-phase, facilitating their proteolytic turnover from chromatin to ensure DNA replication and mitotic fidelity. Plays an essential role in the cytoplasmic maturation steps of pre-60S ribosomal particles by promoting the release of shuttling protein RSL24D1/RLP24 from the pre-ribosomal particles. In Homo sapiens (Human), this protein is ATPase family gene 2 protein homolog B.